Consider the following 316-residue polypeptide: Annexin A13 (316 aa).

G2 carries N-myristoyl glycine lipidation. Annexin repeat units follow at residues 14 to 85 (FDVD…ALLD), 86 to 157 (RPSE…SLLQ), 169 to 241 (DLAG…TLVR), and 245 to 316 (DQEG…ALLH).

Belongs to the annexin family. Monomer and homodimer. Detected in intestine, and at much lower levels also in kidney (at protein level).

It is found in the apical cell membrane. The protein resides in the cell membrane. Its subcellular location is the cytoplasmic vesicle. Its function is as follows. Binds to membranes enriched in phosphatidylserine or phosphatidylglycerol in a calcium-dependent manner. Half-maximal membrane binding requires about 60 uM calcium. Does not bind to membranes that lack phospholipids with an acidic headgroup. In terms of biological role, binds to membranes enriched in phosphatidylserine or phosphatidylglycerol in a calcium-dependent manner, but requires higher calcium levels for membrane binding than isoform A. Half-maximal membrane binding requires about 320 uM calcium. May play a role in vesicular traffic to the apical plasma membrane. The polypeptide is Annexin A13 (ANXA13) (Canis lupus familiaris (Dog)).